A 290-amino-acid polypeptide reads, in one-letter code: uncharacterized protein (290 aa).

Catalysis depends on lysine 203, which acts as the Schiff-base intermediate with substrate.

The protein belongs to the DeoC/FbaB aldolase family.

This is an uncharacterized protein from Pasteurella multocida (strain Pm70).